The primary structure comprises 262 residues: tRNA pseudouridine synthase B (262 aa).

Catalysis depends on aspartate 77, which acts as the Nucleophile.

It belongs to the pseudouridine synthase TruB family. Type 1 subfamily.

It catalyses the reaction uridine(55) in tRNA = pseudouridine(55) in tRNA. Functionally, responsible for synthesis of pseudouridine from uracil-55 in the psi GC loop of transfer RNAs. This is tRNA pseudouridine synthase B from Protochlamydia amoebophila (strain UWE25).